The following is a 620-amino-acid chain: Glutathione-regulated potassium-efflux system protein KefC (620 aa).

12 helical membrane passes run 4 to 24 (HTLL…PIAV), 26 to 46 (LGLG…PWGL), 54 to 74 (SILH…GLEL), 90 to 110 (GALQ…FLGL), 114 to 134 (VAEL…MQAM), 149 to 169 (FAVL…IPLL), 178 to 198 (LGAF…VVLL), 218 to 238 (VFSA…EEVG), 270 to 290 (GLLL…GTLV), 294 to 314 (LRIL…LWLV), 327 to 347 (WFAV…GAAQ), and 359 to 379 (ALTL…MLLT). Positions 399 to 518 (QPRVIVAGFG…AGVAMPERET (120 aa)) constitute an RCK N-terminal domain. Residues 599-620 (QGTAEGKHSGEAADEPEVKPSI) form a disordered region.

This sequence belongs to the monovalent cation:proton antiporter 2 (CPA2) transporter (TC 2.A.37) family. KefC subfamily. Homodimer. Interacts with the regulatory subunit KefF.

The protein localises to the cell inner membrane. Its function is as follows. Pore-forming subunit of a potassium efflux system that confers protection against electrophiles. Catalyzes K(+)/H(+) antiport. This chain is Glutathione-regulated potassium-efflux system protein KefC, found in Salmonella heidelberg (strain SL476).